A 247-amino-acid polypeptide reads, in one-letter code: ATP synthase subunit a, plastid (247 aa).

The next 5 membrane-spanning stretches (helical) occupy residues 33–53, 95–115, 134–154, 199–219, and 220–240; these read FLVH…LLGS, VPFI…GALL, INTT…AGIL, LVVV…VMLL, and GLFT…AYIG.

The protein belongs to the ATPase A chain family. F-type ATPases have 2 components, CF(1) - the catalytic core - and CF(0) - the membrane proton channel. CF(1) has five subunits: alpha(3), beta(3), gamma(1), delta(1), epsilon(1). CF(0) has four main subunits: a, b, b' and c.

It localises to the plastid membrane. Functionally, key component of the proton channel; it plays a direct role in the translocation of protons across the membrane. The chain is ATP synthase subunit a, plastid from Cuscuta exaltata (Tall dodder).